Consider the following 670-residue polypeptide: Tripeptidyl-peptidase SED1 (670 aa).

The first 20 residues, 1–20, serve as a signal peptide directing secretion; it reads MSTMIFMYFIYIVLYASGIA. Positions 21–231 are cleaved as a propeptide — removed in mature form; the sequence is ANLSYHVHEK…VGLLKNKILS (211 aa). Residues 241–669 form the Peptidase S53 domain; sequence LITPDCLRAL…DRMLDLFLQL (429 aa). Active-site charge relay system residues include Glu-318 and Asp-322. 5 N-linked (GlcNAc...) asparagine glycosylation sites follow: Asn-334, Asn-387, Asn-488, Asn-508, and Asn-551. The active-site Charge relay system is the Ser-586. Residues Asp-627, Val-628, Gly-647, and Asp-649 each coordinate Ca(2+).

Ca(2+) is required as a cofactor.

It is found in the secreted. The protein resides in the extracellular space. The enzyme catalyses Release of an N-terminal tripeptide from a polypeptide.. Its function is as follows. Secreted tripeptidyl-peptidase which degrades proteins at acidic pHs and is involved in virulence. This is Tripeptidyl-peptidase SED1 (SED1) from Arthroderma otae (strain ATCC MYA-4605 / CBS 113480) (Microsporum canis).